The chain runs to 208 residues: MTNNLIAKAAIDRRLAEIVSPVIADLGYELVRIRLMSGKSTTLQIMADKPDGGIEVDDCAAISNAVSATLDVEDPILDAYTLEVSSPGIDRPLTRLKDFEMFEGYEAKIETTEMIDGRRRFRGELAGIEGNEVLINLDQNGETVTIGLEFDWLSDAKLVLTDDLIKEMLRQRKAAGVLNEDQFDEIVEEAPETGATTMARDGSEEETK.

Residues 189–208 (EAPETGATTMARDGSEEETK) form a disordered region.

This sequence belongs to the RimP family.

The protein localises to the cytoplasm. Its function is as follows. Required for maturation of 30S ribosomal subunits. This Ruegeria pomeroyi (strain ATCC 700808 / DSM 15171 / DSS-3) (Silicibacter pomeroyi) protein is Ribosome maturation factor RimP.